We begin with the raw amino-acid sequence, 212 residues long: Regulatory protein RecX (212 aa).

Belongs to the RecX family.

Its subcellular location is the cytoplasm. In terms of biological role, modulates RecA activity. In Clostridium botulinum (strain Alaska E43 / Type E3), this protein is Regulatory protein RecX.